Here is a 97-residue protein sequence, read N- to C-terminus: Aspartyl/glutamyl-tRNA(Asn/Gln) amidotransferase subunit C (97 aa).

The tract at residues 68 to 97 (ETGFTQEEALSNAPQQSQGQFRTPKVVESA) is disordered. Positions 70-88 (GFTQEEALSNAPQQSQGQF) are enriched in polar residues.

Belongs to the GatC family. Heterotrimer of A, B and C subunits.

It catalyses the reaction L-glutamyl-tRNA(Gln) + L-glutamine + ATP + H2O = L-glutaminyl-tRNA(Gln) + L-glutamate + ADP + phosphate + H(+). The enzyme catalyses L-aspartyl-tRNA(Asn) + L-glutamine + ATP + H2O = L-asparaginyl-tRNA(Asn) + L-glutamate + ADP + phosphate + 2 H(+). In terms of biological role, allows the formation of correctly charged Asn-tRNA(Asn) or Gln-tRNA(Gln) through the transamidation of misacylated Asp-tRNA(Asn) or Glu-tRNA(Gln) in organisms which lack either or both of asparaginyl-tRNA or glutaminyl-tRNA synthetases. The reaction takes place in the presence of glutamine and ATP through an activated phospho-Asp-tRNA(Asn) or phospho-Glu-tRNA(Gln). This chain is Aspartyl/glutamyl-tRNA(Asn/Gln) amidotransferase subunit C, found in Akkermansia muciniphila (strain ATCC BAA-835 / DSM 22959 / JCM 33894 / BCRC 81048 / CCUG 64013 / CIP 107961 / Muc).